The following is a 149-amino-acid chain: Calmodulin-1 (149 aa).

Alanine 2 is subject to N-acetylalanine. 4 consecutive EF-hand domains span residues 8–43 (EQIA…LGQN), 44–79 (PTEA…KMKD), 81–116 (DSEE…LGEK), and 117–149 (LTDE…MLAK). Ca(2+) contacts are provided by aspartate 21, aspartate 23, aspartate 25, cysteine 27, glutamate 32, aspartate 57, aspartate 59, asparagine 61, threonine 63, glutamate 68, aspartate 94, aspartate 96, asparagine 98, and glutamate 105. At lysine 116 the chain carries N6,N6,N6-trimethyllysine. Ca(2+) contacts are provided by aspartate 130, aspartate 132, aspartate 134, glutamine 136, and glutamate 141.

It belongs to the calmodulin family. As to expression, high expression in stolon tips and stems, moderate in roots, and very low in leaves. Localized in the meristematic regions of the shoot and root tips, the tip of the developing tuber and the vascular zones of petiole and tuber. Not detected in mesophyll cells.

In terms of biological role, calmodulin mediates the control of a large number of enzymes, ion channels and other proteins by Ca(2+). Among the enzymes to be stimulated by the calmodulin-Ca(2+) complex are a number of protein kinases and phosphatases. This chain is Calmodulin-1 (PCM1), found in Solanum tuberosum (Potato).